We begin with the raw amino-acid sequence, 330 residues long: Phosphate acyltransferase (330 aa).

Belongs to the PlsX family. As to quaternary structure, homodimer. Probably interacts with PlsY.

The protein resides in the cytoplasm. The catalysed reaction is a fatty acyl-[ACP] + phosphate = an acyl phosphate + holo-[ACP]. It participates in lipid metabolism; phospholipid metabolism. Its function is as follows. Catalyzes the reversible formation of acyl-phosphate (acyl-PO(4)) from acyl-[acyl-carrier-protein] (acyl-ACP). This enzyme utilizes acyl-ACP as fatty acyl donor, but not acyl-CoA. The chain is Phosphate acyltransferase from Bacillus licheniformis (strain ATCC 14580 / DSM 13 / JCM 2505 / CCUG 7422 / NBRC 12200 / NCIMB 9375 / NCTC 10341 / NRRL NRS-1264 / Gibson 46).